The primary structure comprises 253 residues: 3-isopropylmalate dehydratase small subunit 3 (253 aa).

A chloroplast-targeting transit peptide spans 1–56 (MATSQQFLNPTLFKSLASSNKNSCTLCPSPFLQLKSASTIFNYKPLTSSSATIITR).

This sequence belongs to the LeuD family. As to quaternary structure, heterodimer of the large LEUC/IIL1 subunit and the small LEUD (SSU1, SSU2 or SSU3) subunits. In terms of tissue distribution, expressed in vascular bundles of roots, cotyledons and rosette leaves. Expressed in stem vascular bundles which branche off into lateral inflorescences. Expressed in connective tissues in anthers. In hypocotyls, expressed in parenchyma cells surrounding the vasculature. In rosette leaves, expressed in phloem cells and cells close to the xylem along the vascular bundles. In roots of adult plants, expressed in cells closely associated with the stele. In flowering stalks, expressed in parenchyma cells associated with the phloem or the xylem.

It localises to the plastid. The protein localises to the chloroplast stroma. The enzyme catalyses (2R,3S)-3-isopropylmalate = (2S)-2-isopropylmalate. The catalysed reaction is a 2-(omega-methylsulfanyl)alkylmalate = a 2-(omega-methylsulfanyl)alkylmaleate + H2O. It catalyses the reaction 2-(3-methylsulfanyl)propylmalate = 2-(2-methylsulfanyl)propylmaleate + H2O. It carries out the reaction a 3-(omega-methylsulfanyl)alkylmalate = a 2-(omega-methylsulfanyl)alkylmaleate + H2O. The enzyme catalyses 2-(2-methylsulfanyl)ethylmalate = 2-(2-methylsulfanyl)ethylmaleate + H2O. The catalysed reaction is 3-(2-methylsulfanyl)ethylmalate = 2-(2-methylsulfanyl)ethylmaleate + H2O. It catalyses the reaction 3-(3-methylsulfanyl)propylmalate = 2-(2-methylsulfanyl)propylmaleate + H2O. It functions in the pathway amino-acid biosynthesis; L-leucine biosynthesis; L-leucine from 3-methyl-2-oxobutanoate: step 2/4. In terms of biological role, catalyzes the isomerization between 2-isopropylmalate and 3-isopropylmalate, via the formation of 2-isopropylmaleate. Functions redundantly with LEUD1 in the methionine chain elongation pathway of aliphatic glucosinolate formation. This is 3-isopropylmalate dehydratase small subunit 3 from Arabidopsis thaliana (Mouse-ear cress).